Reading from the N-terminus, the 515-residue chain is mRNA export factor ICP27 homolog (515 aa).

4 residues coordinate Zn(2+): cysteine 230, histidine 335, cysteine 337, and cysteine 342. The segment at 230-342 (CVFNDNGHGD…SNHKCDDVSC (113 aa)) adopts a CHC2-type zinc-finger fold. Over residues 398–408 (YSTNHDLPQTS) the composition is skewed to polar residues. The segment at 398 to 422 (YSTNHDLPQTSHRSHKNHGTPKVKS) is disordered. Positions 409–422 (HRSHKNHGTPKVKS) are enriched in basic residues.

The protein belongs to the HHV-1 ICP27 protein family.

It localises to the virion tegument. Its subcellular location is the virion. The protein resides in the host nucleus. The protein localises to the host cytoplasm. Its function is as follows. Immediate early (EI) protein that plays many roles during productive infection including regulation of viral gene expression and nuclear export of intronless viral RNAs. The polypeptide is mRNA export factor ICP27 homolog (Human herpesvirus 6A (strain Uganda-1102) (HHV-6 variant A)).